The following is a 91-amino-acid chain: Large ribosomal subunit protein bL27 (91 aa).

Residues Met-1–Gly-22 are disordered. A compositionally biased stretch (polar residues) spans Gln-7 to Gln-19.

It belongs to the bacterial ribosomal protein bL27 family.

The chain is Large ribosomal subunit protein bL27 from Myxococcus xanthus (strain DK1622).